A 770-amino-acid polypeptide reads, in one-letter code: Probable copper-exporting P-type ATPase V (770 aa).

The HMA domain occupies 1 to 66 (MRVCVTGFNV…AITKAQHVPA (66 aa)). Positions 103-130 (DKPLKASRCGGRPRGPVRGSASWPGEQN) are disordered. Residues 110-121 (RCGGRPRGPVRG) show a composition bias toward low complexity. 6 helical membrane passes run 141 to 161 (VWLA…FGAY), 164 to 184 (AGWL…WPIL), 193 to 213 (ALTS…FVYS), 217 to 237 (LFAG…FVVL), 377 to 397 (AVFV…WTLI), and 402 to 422 (VAGM…ALGL). D460 serves as the catalytic 4-aspartylphosphate intermediate. Residues D660 and D664 each coordinate Mg(2+). Helical transmembrane passes span 718 to 737 (LGWA…LGAL) and 741 to 760 (VAGA…SLRL).

Belongs to the cation transport ATPase (P-type) (TC 3.A.3) family. Type IB subfamily.

Its subcellular location is the cell membrane. It carries out the reaction Cu(+)(in) + ATP + H2O = Cu(+)(out) + ADP + phosphate + H(+). In terms of biological role, necessary for copper homeostasis and likely functions as a copper exporter. Also required for full virulence. This chain is Probable copper-exporting P-type ATPase V (ctpV), found in Mycobacterium tuberculosis (strain CDC 1551 / Oshkosh).